Here is a 175-residue protein sequence, read N- to C-terminus: Large ribosomal subunit protein uL10 (175 aa).

It belongs to the universal ribosomal protein uL10 family. In terms of assembly, part of the ribosomal stalk of the 50S ribosomal subunit. The N-terminus interacts with L11 and the large rRNA to form the base of the stalk. The C-terminus forms an elongated spine to which L12 dimers bind in a sequential fashion forming a multimeric L10(L12)X complex.

Forms part of the ribosomal stalk, playing a central role in the interaction of the ribosome with GTP-bound translation factors. The protein is Large ribosomal subunit protein uL10 of Thermobifida fusca (strain YX).